We begin with the raw amino-acid sequence, 411 residues long: Citrate synthase (411 aa).

Residues histidine 304 and aspartate 363 contribute to the active site.

Belongs to the citrate synthase family.

It carries out the reaction oxaloacetate + acetyl-CoA + H2O = citrate + CoA + H(+). The protein operates within carbohydrate metabolism; tricarboxylic acid cycle; isocitrate from oxaloacetate: step 1/2. The polypeptide is Citrate synthase (gltA) (Rickettsia akari).